The following is a 214-amino-acid chain: Holliday junction branch migration complex subunit RuvA (214 aa).

Residues M1–P63 form a domain I region. The tract at residues G64 to R139 is domain II. The flexible linker stretch occupies residues R139–S143. Positions A144–R214 are domain III.

Belongs to the RuvA family. As to quaternary structure, homotetramer. Forms an RuvA(8)-RuvB(12)-Holliday junction (HJ) complex. HJ DNA is sandwiched between 2 RuvA tetramers; dsDNA enters through RuvA and exits via RuvB. An RuvB hexamer assembles on each DNA strand where it exits the tetramer. Each RuvB hexamer is contacted by two RuvA subunits (via domain III) on 2 adjacent RuvB subunits; this complex drives branch migration. In the full resolvosome a probable DNA-RuvA(4)-RuvB(12)-RuvC(2) complex forms which resolves the HJ.

It localises to the cytoplasm. In terms of biological role, the RuvA-RuvB-RuvC complex processes Holliday junction (HJ) DNA during genetic recombination and DNA repair, while the RuvA-RuvB complex plays an important role in the rescue of blocked DNA replication forks via replication fork reversal (RFR). RuvA specifically binds to HJ cruciform DNA, conferring on it an open structure. The RuvB hexamer acts as an ATP-dependent pump, pulling dsDNA into and through the RuvAB complex. HJ branch migration allows RuvC to scan DNA until it finds its consensus sequence, where it cleaves and resolves the cruciform DNA. This chain is Holliday junction branch migration complex subunit RuvA, found in Clavibacter sepedonicus (Clavibacter michiganensis subsp. sepedonicus).